The primary structure comprises 367 residues: Putative C-&gt;U-editing enzyme APOBEC-4 (367 aa).

The CMP/dCMP-type deaminase domain occupies 61-177 (PQTKHLTFYE…AWNREALRSL (117 aa)). H93 contacts Zn(2+). E95 serves as the catalytic Proton donor. C127 and C134 together coordinate Zn(2+).

Belongs to the cytidine and deoxycytidylate deaminase family. It depends on Zn(2+) as a cofactor. In terms of tissue distribution, predominantly expressed in testis.

Its function is as follows. Putative C to U editing enzyme whose physiological substrate is not yet known. The chain is Putative C-&gt;U-editing enzyme APOBEC-4 (APOBEC4) from Homo sapiens (Human).